The sequence spans 161 residues: Disulfide bond formation protein B (161 aa).

The Cytoplasmic portion of the chain corresponds to 1–8; sequence MQANSRAY. Residues 9–25 form a helical membrane-spanning segment; the sequence is FLLIALVSFGLVGVALY. Residues 26 to 43 lie on the Periplasmic side of the membrane; sequence LQFEKGYQPCPLCVMQRF. Cysteine 35 and cysteine 38 are oxidised to a cystine. A helical membrane pass occupies residues 44-58; that stretch reads AFIGIGIFSLLAAVA. Over 59-63 the chain is Cytoplasmic; the sequence is QNTRS. A helical transmembrane segment spans residues 64–81; sequence LWQGLGMLSGIAGIAVAV. Residues 82 to 136 are Periplasmic-facing; it reads YHVSLLLNPKASCGIDPLENWVNALPTAKALPQVFYADGLCTAPLPPVLGLSVPA. Cysteine 94 and cysteine 122 are disulfide-bonded. The chain crosses the membrane as a helical span at residues 137–155; the sequence is WSLIWLFILTLTLAVGLIR. The Cytoplasmic portion of the chain corresponds to 156 to 161; the sequence is REKNFR.

Belongs to the DsbB family.

Its subcellular location is the cell inner membrane. Functionally, required for disulfide bond formation in some periplasmic proteins. Acts by oxidizing the DsbA protein. In Cupriavidus necator (strain ATCC 17699 / DSM 428 / KCTC 22496 / NCIMB 10442 / H16 / Stanier 337) (Ralstonia eutropha), this protein is Disulfide bond formation protein B.